A 228-amino-acid chain; its full sequence is Flagellar L-ring protein (228 aa).

The first 17 residues, M1–S17, serve as a signal peptide directing secretion. A lipid anchor (N-palmitoyl cysteine) is attached at C18. Residue C18 is the site of S-diacylglycerol cysteine attachment.

It belongs to the FlgH family. The basal body constitutes a major portion of the flagellar organelle and consists of four rings (L,P,S, and M) mounted on a central rod.

The protein resides in the cell membrane. Its subcellular location is the bacterial flagellum basal body. Its function is as follows. Assembles around the rod to form the L-ring and probably protects the motor/basal body from shearing forces during rotation. This is Flagellar L-ring protein from Wigglesworthia glossinidia brevipalpis.